The chain runs to 737 residues: Procollagen-lysine,2-oxoglutarate 5-dioxygenase 2 (737 aa).

Residues 1 to 25 form the signal peptide; the sequence is MGDRGARPGRLMPMLALLSWAAGLG. Asn63 and Asn209 each carry an N-linked (GlcNAc...) asparagine glycan. Thr320 carries the post-translational modification Phosphothreonine. Tyr323 carries the phosphotyrosine modification. 2 N-linked (GlcNAc...) asparagine glycosylation sites follow: Asn365 and Asn522. The Fe2OG dioxygenase domain maps to 644–737; the sequence is KGFALLNFVV…RYIAVSFIDP (94 aa). His666 and Asp668 together coordinate Fe cation. The N-linked (GlcNAc...) asparagine glycan is linked to Asn696. Lys704 is modified (N6-succinyllysine). His718 provides a ligand contact to Fe cation. N-linked (GlcNAc...) asparagine glycosylation is present at Asn725. The active site involves Arg728.

As to quaternary structure, homodimer. It depends on Fe(2+) as a cofactor. Requires L-ascorbate as cofactor. Is highly expressed in the heart, lung, kidney, eye, ovary and placenta.

Its subcellular location is the rough endoplasmic reticulum membrane. It carries out the reaction L-lysyl-[collagen] + 2-oxoglutarate + O2 = (5R)-5-hydroxy-L-lysyl-[collagen] + succinate + CO2. Forms hydroxylysine residues in -Xaa-Lys-Gly- sequences in collagens. These hydroxylysines serve as sites of attachment for carbohydrate units and are essential for the stability of the intermolecular collagen cross-links. The sequence is that of Procollagen-lysine,2-oxoglutarate 5-dioxygenase 2 (Plod2) from Mus musculus (Mouse).